The primary structure comprises 161 residues: Phosphopantetheine adenylyltransferase (161 aa).

Ser-9 serves as a coordination point for substrate. ATP contacts are provided by residues 9–10 (SF) and His-17. 3 residues coordinate substrate: Lys-41, Thr-73, and Arg-87. Residues 88-90 (GLR), Glu-98, and 123-129 (YSFISST) contribute to the ATP site.

This sequence belongs to the bacterial CoaD family. As to quaternary structure, homohexamer. Mg(2+) is required as a cofactor.

It is found in the cytoplasm. It carries out the reaction (R)-4'-phosphopantetheine + ATP + H(+) = 3'-dephospho-CoA + diphosphate. It participates in cofactor biosynthesis; coenzyme A biosynthesis; CoA from (R)-pantothenate: step 4/5. Its function is as follows. Reversibly transfers an adenylyl group from ATP to 4'-phosphopantetheine, yielding dephospho-CoA (dPCoA) and pyrophosphate. This chain is Phosphopantetheine adenylyltransferase, found in Desulforamulus reducens (strain ATCC BAA-1160 / DSM 100696 / MI-1) (Desulfotomaculum reducens).